A 99-amino-acid chain; its full sequence is uncharacterized protein (99 aa).

The signal sequence occupies residues 1-17 (MMMNAFFPAMALMVLVG). A lipid anchor (N-palmitoyl cysteine) is attached at Cys-18. A lipid anchor (S-diacylglycerol cysteine) is attached at Cys-18.

Its subcellular location is the cell membrane. This is an uncharacterized protein from Shigella boydii serotype 4 (strain Sb227).